The sequence spans 392 residues: Trans-2-enoyl-CoA reductase [NADH] (392 aa).

NAD(+) is bound by residues Phe-74 to Glu-75, Asp-111 to Ala-112, and Leu-141 to Ala-142. A substrate-binding site is contributed by Tyr-227. Tyr-237 serves as the catalytic Proton donor. NAD(+) contacts are provided by residues Lys-246 and Val-276–Thr-278.

The protein belongs to the TER reductase family. Monomer.

The enzyme catalyses a 2,3-saturated acyl-CoA + NAD(+) = a (2E)-enoyl-CoA + NADH + H(+). It functions in the pathway lipid metabolism; fatty acid biosynthesis. Its function is as follows. Involved in the fatty acid synthesis (FAS II). Catalyzes the reduction of a carbon-carbon double bond in an enoyl moiety that is covalently linked to a coenzyme A (CoA). The chain is Trans-2-enoyl-CoA reductase [NADH] from Brachyspira hyodysenteriae (strain ATCC 49526 / WA1).